The following is a 528-amino-acid chain: Aspartic proteinase-like protein 1 (528 aa).

Residues 1-22 (MVSRSAFLLFCVLFLATEETLA) form the signal peptide. In terms of domain architecture, Peptidase A1 spans 100-449 (HYTWIDIGTP…DRENMKLGWS (350 aa)). Residue Asp118 is part of the active site. 2 N-linked (GlcNAc...) asparagine glycosylation sites follow: Asn193 and Asn217. Residue Asp333 is part of the active site. Residues Asn358 and Asn391 are each glycosylated (N-linked (GlcNAc...) asparagine). The disordered stretch occupies residues 451–503 (SKCQEDKIEPPQASPGSTSSPNPLPTDEQQSRGGHAVSPAIAGKTPSKTPSSS). The segment covering 464–482 (SPGSTSSPNPLPTDEQQSR) has biased composition (polar residues). Over residues 494–503 (KTPSKTPSSS) the composition is skewed to low complexity. The GPI-anchor amidated serine moiety is linked to residue Ser503. A propeptide spans 504–528 (SSYSFSSIMRLFNSLLLLHWLASLM) (removed in mature form).

The protein belongs to the peptidase A1 family.

The protein localises to the cell membrane. The protein is Aspartic proteinase-like protein 1 of Arabidopsis thaliana (Mouse-ear cress).